Here is a 573-residue protein sequence, read N- to C-terminus: Developmental and secondary metabolism regulator VEL1 (573 aa).

Residues 26–220 enclose the Velvet domain; sequence NRHLWYQLTV…ADQGCRVRIR (195 aa). Residues 40–45 carry the Nuclear localization signal motif; it reads ERARAC. The tract at residues 222-520 is disordered; sequence DVRMRKRDGK…STGGKRKHDH (299 aa). Residues 230–245 show a composition bias toward basic and acidic residues; the sequence is GKGSGFDRRGEEEYSR. Composition is skewed to pro residues over residues 291–310 and 341–351; these read APPP…PPAA and APIPPATPTGP. Over residues 352 to 363 the composition is skewed to low complexity; the sequence is YPTSSAAPSPYA. Residues 379-389 are compositionally biased toward pro residues; it reads PPAPSASPAPP. The span at 432-448 shows a compositional bias: polar residues; the sequence is TPASQPTYSTPASQPTY. Residues 458-475 show a composition bias toward pro residues; that stretch reads SAPPPAPYSAPAPPPPRP. A PEST region spans residues 476–504; that stretch reads SMSQSSLAPLKIASLVSPLPPIEAQTEPL.

The protein belongs to the velvet family. VeA subfamily. In terms of assembly, component of the heterotrimeric velvet complex composed of LAE1, VEL1 and VEL2; VEL1 acting as a bridging protein between LAE1 and VEL2. Interacts with LAE1.

The protein resides in the nucleus. Its subcellular location is the cytoplasm. In terms of biological role, component of the velvet transcription factor complex that controls sexual/asexual developmental ratio in response to light, promoting sexual development in the darkness while stimulating asexual sporulation under illumination. The velvet complex hat acts as a global regulator for secondary metabolite gene expression. Regulates expression of the carbohydrate-active enzyme gene clusters. This is Developmental and secondary metabolism regulator VEL1 from Hypocrea jecorina (strain QM6a) (Trichoderma reesei).